The primary structure comprises 352 residues: tRNA-specific 2-thiouridylase MnmA (352 aa).

ATP-binding positions include 11 to 18 (AMSGGVDS) and M37. C101 serves as the catalytic Nucleophile. C101 and C197 are joined by a disulfide. An ATP-binding site is contributed by G125. The tract at residues 147-149 (KDQ) is interaction with tRNA. C197 functions as the Cysteine persulfide intermediate in the catalytic mechanism. The interaction with tRNA stretch occupies residues 302–303 (RY).

It belongs to the MnmA/TRMU family.

It localises to the cytoplasm. It catalyses the reaction S-sulfanyl-L-cysteinyl-[protein] + uridine(34) in tRNA + AH2 + ATP = 2-thiouridine(34) in tRNA + L-cysteinyl-[protein] + A + AMP + diphosphate + H(+). In terms of biological role, catalyzes the 2-thiolation of uridine at the wobble position (U34) of tRNA, leading to the formation of s(2)U34. This chain is tRNA-specific 2-thiouridylase MnmA, found in Syntrophotalea carbinolica (strain DSM 2380 / NBRC 103641 / GraBd1) (Pelobacter carbinolicus).